The primary structure comprises 227 residues: Germin-like protein subfamily 1 member 3 (227 aa).

Residues 1–24 form the signal peptide; sequence MKYPFQCFLAKIILLALASSFVSC. Cys34 and Cys50 form a disulfide bridge. A Cupin type-1 domain is found at 64–212; that stretch reads SGLNIPGNTN…AFALDINIVR (149 aa). Mn(2+) contacts are provided by His109, His111, and Glu116. N-linked (GlcNAc...) asparagine glycosylation is present at Asn136. His160 contacts Mn(2+).

It belongs to the germin family. In terms of assembly, oligomer (believed to be a pentamer but probably hexamer).

It is found in the secreted. The protein localises to the extracellular space. It localises to the apoplast. In terms of biological role, may play a role in plant defense. Probably has no oxalate oxidase activity even if the active site is conserved. This Arabidopsis thaliana (Mouse-ear cress) protein is Germin-like protein subfamily 1 member 3.